Here is a 217-residue protein sequence, read N- to C-terminus: ATP phosphoribosyltransferase (217 aa).

The protein belongs to the ATP phosphoribosyltransferase family. Short subfamily. Heteromultimer composed of HisG and HisZ subunits.

Its subcellular location is the cytoplasm. The catalysed reaction is 1-(5-phospho-beta-D-ribosyl)-ATP + diphosphate = 5-phospho-alpha-D-ribose 1-diphosphate + ATP. It functions in the pathway amino-acid biosynthesis; L-histidine biosynthesis; L-histidine from 5-phospho-alpha-D-ribose 1-diphosphate: step 1/9. Functionally, catalyzes the condensation of ATP and 5-phosphoribose 1-diphosphate to form N'-(5'-phosphoribosyl)-ATP (PR-ATP). Has a crucial role in the pathway because the rate of histidine biosynthesis seems to be controlled primarily by regulation of HisG enzymatic activity. The chain is ATP phosphoribosyltransferase from Burkholderia lata (strain ATCC 17760 / DSM 23089 / LMG 22485 / NCIMB 9086 / R18194 / 383).